A 631-amino-acid chain; its full sequence is 1-deoxy-D-xylulose-5-phosphate synthase (631 aa).

Thiamine diphosphate contacts are provided by residues histidine 73, 113–115 (SHA), asparagine 174, tyrosine 285, and glutamate 367. Position 174 (asparagine 174) interacts with Mg(2+).

This sequence belongs to the transketolase family. DXPS subfamily. As to quaternary structure, homodimer. Mg(2+) is required as a cofactor. The cofactor is thiamine diphosphate.

It catalyses the reaction D-glyceraldehyde 3-phosphate + pyruvate + H(+) = 1-deoxy-D-xylulose 5-phosphate + CO2. The protein operates within metabolic intermediate biosynthesis; 1-deoxy-D-xylulose 5-phosphate biosynthesis; 1-deoxy-D-xylulose 5-phosphate from D-glyceraldehyde 3-phosphate and pyruvate: step 1/1. Functionally, catalyzes the acyloin condensation reaction between C atoms 2 and 3 of pyruvate and glyceraldehyde 3-phosphate to yield 1-deoxy-D-xylulose-5-phosphate (DXP). This is 1-deoxy-D-xylulose-5-phosphate synthase from Streptomyces sp. (strain CL190).